A 338-amino-acid chain; its full sequence is tRNA-specific 2-thiouridylase MnmA (338 aa).

ATP is bound by residues 6–13 (LMSGGIDS) and methionine 32. Cysteine 87 functions as the Nucleophile in the catalytic mechanism. Cysteine 87 and cysteine 185 are oxidised to a cystine. Glycine 111 is a binding site for ATP. The interaction with tRNA stretch occupies residues 135-137 (KDQ). Cysteine 185 functions as the Cysteine persulfide intermediate in the catalytic mechanism. The segment at 288–289 (RY) is interaction with tRNA.

It belongs to the MnmA/TRMU family.

The protein resides in the cytoplasm. The enzyme catalyses S-sulfanyl-L-cysteinyl-[protein] + uridine(34) in tRNA + AH2 + ATP = 2-thiouridine(34) in tRNA + L-cysteinyl-[protein] + A + AMP + diphosphate + H(+). In terms of biological role, catalyzes the 2-thiolation of uridine at the wobble position (U34) of tRNA, leading to the formation of s(2)U34. This chain is tRNA-specific 2-thiouridylase MnmA, found in Syntrophomonas wolfei subsp. wolfei (strain DSM 2245B / Goettingen).